Reading from the N-terminus, the 234-residue chain is Ion-translocating oxidoreductase complex subunit E (234 aa).

5 consecutive transmembrane segments (helical) span residues 62 to 82, 92 to 112, 116 to 136, 151 to 171, and 205 to 225; these read LGLG…ISLF, IPIY…LMNA, TLYQ…IIIG, IWDG…LGAL, and SFLL…LLAI.

Belongs to the NqrDE/RnfAE family. In terms of assembly, the complex is composed of six subunits: RnfA, RnfB, RnfC, RnfD, RnfE and RnfG.

The protein localises to the cell inner membrane. Its function is as follows. Part of a membrane-bound complex that couples electron transfer with translocation of ions across the membrane. The chain is Ion-translocating oxidoreductase complex subunit E from Haemophilus influenzae (strain PittGG).